A 347-amino-acid polypeptide reads, in one-letter code: Glycerol-1-phosphate dehydrogenase [NAD(P)+] (347 aa).

Residues 90–94 and 112–115 each bind NAD(+); these read GRPVD and TAIS. D117 provides a ligand contact to substrate. S121 serves as a coordination point for NAD(+). D165 is a binding site for substrate. Residues D165 and H245 each coordinate Zn(2+). H249 lines the substrate pocket. H262 lines the Zn(2+) pocket.

It belongs to the glycerol-1-phosphate dehydrogenase family. Homodimer. Requires Zn(2+) as cofactor.

It localises to the cytoplasm. It catalyses the reaction sn-glycerol 1-phosphate + NAD(+) = dihydroxyacetone phosphate + NADH + H(+). The catalysed reaction is sn-glycerol 1-phosphate + NADP(+) = dihydroxyacetone phosphate + NADPH + H(+). It functions in the pathway membrane lipid metabolism; glycerophospholipid metabolism. Functionally, catalyzes the NAD(P)H-dependent reduction of dihydroxyacetonephosphate (DHAP or glycerone phosphate) to glycerol 1-phosphate (G1P). The G1P thus generated is used as the glycerophosphate backbone of phospholipids in the cellular membranes of Archaea. This chain is Glycerol-1-phosphate dehydrogenase [NAD(P)+], found in Thermofilum pendens (strain DSM 2475 / Hrk 5).